Consider the following 435-residue polypeptide: MTLTGCVDYYEIIAGTKVAVCRNAIDNKTVATAIAATRTVNGNDDPFVVMNVSTIMAKVIQWQRTMPRVAPCYAVKCNDDKVLLRTLADLGMGFDCASKAEIEKVIGLVGPEKIVYANPCKTRGFIAHAEAAGVKRMTFDSVEELTKIKQNHADPSLILRISVSDPTAQCQLGIKFGCDPETVAPKLLRKAADMGMNVIGISFHVGSGCNEPATFRTALEYARGLFDLGISLGLSMTLLDIGGGFPGVDTAHISLDACAAVINPALEELFPLDSCPDVEVIAEPGRYFACAAVSVTTNVIASVKVPASRITEKADDVNRDGYMYYMNDGVYGSFNCKLFDHYQPRGMPLAEHDADEPRFPVCVWGPTCDGLDQVEESSVMPRLYEGDWLYYPDMGAYTSVAASTFNGFDKPKTYYFIDEATLGSIVRKADSAPRG.

Lys76 carries the post-translational modification N6-(pyridoxal phosphate)lysine. Pyridoxal 5'-phosphate is bound by residues Ser207, Gly244, and Glu283–Arg286. Phe339 to Asp340 contributes to the substrate binding site. Catalysis depends on Cys368, which acts as the Proton donor; shared with dimeric partner. Asp369 is a substrate binding site. Position 397 (Tyr397) interacts with pyridoxal 5'-phosphate.

Belongs to the Orn/Lys/Arg decarboxylase class-II family. In terms of assembly, homodimer. Only the dimer is catalytically active, as the active sites are constructed of residues from both monomers. The cofactor is pyridoxal 5'-phosphate.

The catalysed reaction is L-ornithine + H(+) = putrescine + CO2. It functions in the pathway amine and polyamine biosynthesis; putrescine biosynthesis via L-ornithine pathway; putrescine from L-ornithine: step 1/1. With respect to regulation, inhibited by antizyme (AZ) in response to polyamine levels. AZ inhibits the assembly of the functional homodimer by binding to ODC monomers and targeting them for ubiquitin-independent proteolytic destruction by the 26S proteasome. Its function is as follows. Catalyzes the first and rate-limiting step of polyamine biosynthesis that converts ornithine into putrescine, which is the precursor for the polyamines, spermidine and spermine. Polyamines are essential for cell proliferation and are implicated in cellular processes, ranging from DNA replication to apoptosis. The chain is Ornithine decarboxylase (ODC) from Panagrellus redivivus (Microworm).